A 261-amino-acid chain; its full sequence is Glutamate racemase (261 aa).

Substrate is bound by residues Asp-12–Ser-13 and Tyr-44–Gly-45. Catalysis depends on Cys-76, which acts as the Proton donor/acceptor. Substrate is bound at residue Asn-77 to Thr-78. Cys-180 acts as the Proton donor/acceptor in catalysis. Thr-181 to His-182 is a substrate binding site.

The protein belongs to the aspartate/glutamate racemases family.

It catalyses the reaction L-glutamate = D-glutamate. Its pathway is cell wall biogenesis; peptidoglycan biosynthesis. Provides the (R)-glutamate required for cell wall biosynthesis. In Borreliella burgdorferi (strain ATCC 35210 / DSM 4680 / CIP 102532 / B31) (Borrelia burgdorferi), this protein is Glutamate racemase.